Reading from the N-terminus, the 633-residue chain is Extracellular metalloproteinase 3 (633 aa).

The N-terminal stretch at 1–18 is a signal peptide; that stretch reads MHGLLLAGLLALPMNVLA. The propeptide occupies 19-246; it reads HPAEQQTSSV…VHNVVDYVAS (228 aa). Residue asparagine 410 is glycosylated (N-linked (GlcNAc...) asparagine). Histidine 429 contacts Zn(2+). The active site involves glutamate 430. Histidine 433 is a Zn(2+) binding site. Residue asparagine 480 is glycosylated (N-linked (GlcNAc...) asparagine).

The protein belongs to the peptidase M36 family. Zn(2+) serves as cofactor.

It is found in the secreted. Functionally, secreted metalloproteinase probably acting as a virulence factor. This is Extracellular metalloproteinase 3 (MEP3) from Arthroderma otae (Microsporum canis).